The following is a 149-amino-acid chain: Ribosomal RNA large subunit methyltransferase H (149 aa).

Residues Leu71, Gly98, and 117-122 contribute to the S-adenosyl-L-methionine site; that span reads LSKLTL.

The protein belongs to the RNA methyltransferase RlmH family. As to quaternary structure, homodimer.

The protein localises to the cytoplasm. The catalysed reaction is pseudouridine(1915) in 23S rRNA + S-adenosyl-L-methionine = N(3)-methylpseudouridine(1915) in 23S rRNA + S-adenosyl-L-homocysteine + H(+). Its function is as follows. Specifically methylates the pseudouridine at position 1915 (m3Psi1915) in 23S rRNA. This Campylobacter jejuni subsp. doylei (strain ATCC BAA-1458 / RM4099 / 269.97) protein is Ribosomal RNA large subunit methyltransferase H.